A 142-amino-acid polypeptide reads, in one-letter code: Hemoglobin subunit alpha-A (142 aa).

One can recognise a Globin domain in the interval 2–142 (VLTAGDKANV…VATALTSKYR (141 aa)). Residues His-59 and His-88 each coordinate heme b.

This sequence belongs to the globin family. Heterotetramer of two alpha-A chains and two beta chains. Red blood cells.

Its function is as follows. Involved in oxygen transport from the lung to the various peripheral tissues. This Chelonoidis niger (Galapagos giant tortoise) protein is Hemoglobin subunit alpha-A.